Consider the following 165-residue polypeptide: 6,7-dimethyl-8-ribityllumazine synthase (165 aa).

Residues Y30, 61–63 (ALE), and 90–92 (VVI) contribute to the 5-amino-6-(D-ribitylamino)uracil site. 95–96 (ET) serves as a coordination point for (2S)-2-hydroxy-3-oxobutyl phosphate. The Proton donor role is filled by H98. N123 provides a ligand contact to 5-amino-6-(D-ribitylamino)uracil. Residue R137 participates in (2S)-2-hydroxy-3-oxobutyl phosphate binding.

The protein belongs to the DMRL synthase family.

The catalysed reaction is (2S)-2-hydroxy-3-oxobutyl phosphate + 5-amino-6-(D-ribitylamino)uracil = 6,7-dimethyl-8-(1-D-ribityl)lumazine + phosphate + 2 H2O + H(+). It functions in the pathway cofactor biosynthesis; riboflavin biosynthesis; riboflavin from 2-hydroxy-3-oxobutyl phosphate and 5-amino-6-(D-ribitylamino)uracil: step 1/2. Functionally, catalyzes the formation of 6,7-dimethyl-8-ribityllumazine by condensation of 5-amino-6-(D-ribitylamino)uracil with 3,4-dihydroxy-2-butanone 4-phosphate. This is the penultimate step in the biosynthesis of riboflavin. This is 6,7-dimethyl-8-ribityllumazine synthase from Xanthobacter autotrophicus (strain ATCC BAA-1158 / Py2).